Consider the following 194-residue polypeptide: Thymidylate kinase (194 aa).

7–14 is a binding site for ATP; that stretch reads GIDTAGKS.

This sequence belongs to the thymidylate kinase family.

It catalyses the reaction dTMP + ATP = dTDP + ADP. Functionally, phosphorylation of dTMP to form dTDP in both de novo and salvage pathways of dTTP synthesis. This chain is Thymidylate kinase, found in Nautilia profundicola (strain ATCC BAA-1463 / DSM 18972 / AmH).